The following is a 61-amino-acid chain: MAKKSWIVRAQRPPKFSVRAYNRCKICGRSRAYIRKFGMCRICFREHALKGLIPGVVKSSW.

Zn(2+)-binding residues include C24, C27, C40, and C43.

It belongs to the universal ribosomal protein uS14 family. Zinc-binding uS14 subfamily. As to quaternary structure, part of the 30S ribosomal subunit. Contacts proteins S3 and S10. It depends on Zn(2+) as a cofactor.

Functionally, binds 16S rRNA, required for the assembly of 30S particles and may also be responsible for determining the conformation of the 16S rRNA at the A site. This chain is Small ribosomal subunit protein uS14, found in Chloroflexus aurantiacus (strain ATCC 29364 / DSM 637 / Y-400-fl).